The chain runs to 451 residues: Proline--tRNA ligase (451 aa).

It belongs to the class-II aminoacyl-tRNA synthetase family. ProS type 2 subfamily. Homodimer.

It localises to the cytoplasm. It carries out the reaction tRNA(Pro) + L-proline + ATP = L-prolyl-tRNA(Pro) + AMP + diphosphate. Its function is as follows. Catalyzes the attachment of proline to tRNA(Pro) in a two-step reaction: proline is first activated by ATP to form Pro-AMP and then transferred to the acceptor end of tRNA(Pro). This chain is Proline--tRNA ligase, found in Roseobacter denitrificans (strain ATCC 33942 / OCh 114) (Erythrobacter sp. (strain OCh 114)).